The primary structure comprises 156 residues: ATP synthase subunit b (156 aa).

Residues 7 to 29 (LLGQAISFLLFVWFCMKFVWPPL) traverse the membrane as a helical segment.

This sequence belongs to the ATPase B chain family. As to quaternary structure, F-type ATPases have 2 components, F(1) - the catalytic core - and F(0) - the membrane proton channel. F(1) has five subunits: alpha(3), beta(3), gamma(1), delta(1), epsilon(1). F(0) has three main subunits: a(1), b(2) and c(10-14). The alpha and beta chains form an alternating ring which encloses part of the gamma chain. F(1) is attached to F(0) by a central stalk formed by the gamma and epsilon chains, while a peripheral stalk is formed by the delta and b chains.

It localises to the cell inner membrane. In terms of biological role, f(1)F(0) ATP synthase produces ATP from ADP in the presence of a proton or sodium gradient. F-type ATPases consist of two structural domains, F(1) containing the extramembraneous catalytic core and F(0) containing the membrane proton channel, linked together by a central stalk and a peripheral stalk. During catalysis, ATP synthesis in the catalytic domain of F(1) is coupled via a rotary mechanism of the central stalk subunits to proton translocation. Component of the F(0) channel, it forms part of the peripheral stalk, linking F(1) to F(0). In Shewanella halifaxensis (strain HAW-EB4), this protein is ATP synthase subunit b.